Reading from the N-terminus, the 138-residue chain is ATP synthase subunit g, mitochondrial (138 aa).

The protein belongs to the ATPase g subunit family. F-type ATP synthases have 2 components, the catalytic core F(1) and the membrane-embedded component F(0), linked together by a central stalk and a peripheral stalk. The central stalk, also called rotor shaft, is often seen as part of F(1). The peripheral stalk is seen as part of F(0). F(0) contains the membrane channel next to the rotor. F-type ATP synthases form dimers but each monomer functions independently in ATP generation. The dimer consists of 17 different polypeptides: ATP1 (subunit alpha, 3 molecules per monomer, part of F(1)), ATP2 (subunit beta, 3 copies per monomer, part of F(1)), ATP3 (subunit gamma, part of the central stalk), ATP4 (subunit b, part of the peripheral stalk), ATP5/OSCP (subunit 5/OSCP, part of the peripheral stalk), ATP6 (subunit a, part of the peripheral stalk), ATP7 (subunit d, part of the peripheral stalk), ATP8 (subunit 8, part of the peripheral stalk), OLI1 (subunit c, part of the rotor, 10 molecules per monomer), ATP14 (subunit h, part of the peripheral stalk), ATP15 (subunit epsilon, part of the central stalk), ATP16 (subunit delta, part of the central stalk), ATP17 (subunit f, part of the peripheral stalk), ATP18 (subunit i/j, part of the peripheral stalk), ATP19 (subunit k, dimer-specific, at interface between monomers), ATP20 (subunit g, at interface between monomers), TIM11 (subunit e, at interface between monomers).

It localises to the mitochondrion inner membrane. Mitochondrial membrane ATP synthase (F(1)F(0) ATP synthase or Complex V) produces ATP from ADP in the presence of a proton gradient across the membrane which is generated by electron transport complexes of the respiratory chain. F-type ATP synthases consist of two structural domains, F(1) - containing the extramembraneous catalytic core, and F(0) - containing the membrane proton channel, linked together by a central stalk and a peripheral stalk. During catalysis, ATP synthesis in the catalytic domain of F(1) is coupled via a rotary mechanism of the central stalk subunits to proton translocation. Part of the complex F(0) domain. Minor subunit located with subunit a/ATP6 in the membrane. Together with subunit e/TIM11, probably contributes to membrane curvature at the site of the ATP synthase dimer, ultimately contributing to formation of cristae. The chain is ATP synthase subunit g, mitochondrial from Yarrowia lipolytica (strain CLIB 122 / E 150) (Yeast).